The following is a 156-amino-acid chain: MPRKGPAPKRPLVVDPVYQSPLVTQLVNKILLDGKKSVAESIVYGALEGARDKTGGDPVVVLKRALDNVKPAIEVKSRRVGGSTYQVPIEVRPTRSTTLALRWLVGYARQRREKTMTERLLNEILDASNGLGAAVKRREDTHKMAESNRAFAHYRW.

This sequence belongs to the universal ribosomal protein uS7 family. In terms of assembly, part of the 30S ribosomal subunit. Contacts proteins S9 and S11.

One of the primary rRNA binding proteins, it binds directly to 16S rRNA where it nucleates assembly of the head domain of the 30S subunit. Is located at the subunit interface close to the decoding center, probably blocks exit of the E-site tRNA. The chain is Small ribosomal subunit protein uS7 from Kineococcus radiotolerans (strain ATCC BAA-149 / DSM 14245 / SRS30216).